A 477-amino-acid polypeptide reads, in one-letter code: Probable cytosolic Fe-S cluster assembly factor GM20417 (477 aa).

[4Fe-4S] cluster-binding residues include cysteine 23, cysteine 68, cysteine 71, cysteine 74, cysteine 187, cysteine 243, cysteine 395, and cysteine 399.

It belongs to the NARF family.

Component of the cytosolic iron-sulfur (Fe/S) protein assembly machinery. Required for maturation of extramitochondrial Fe/S proteins. The chain is Probable cytosolic Fe-S cluster assembly factor GM20417 from Drosophila sechellia (Fruit fly).